A 354-amino-acid polypeptide reads, in one-letter code: Phosphate acyltransferase (354 aa).

Belongs to the PlsX family. As to quaternary structure, homodimer. Probably interacts with PlsY.

It localises to the cytoplasm. The enzyme catalyses a fatty acyl-[ACP] + phosphate = an acyl phosphate + holo-[ACP]. Its pathway is lipid metabolism; phospholipid metabolism. Its function is as follows. Catalyzes the reversible formation of acyl-phosphate (acyl-PO(4)) from acyl-[acyl-carrier-protein] (acyl-ACP). This enzyme utilizes acyl-ACP as fatty acyl donor, but not acyl-CoA. This is Phosphate acyltransferase from Bordetella petrii (strain ATCC BAA-461 / DSM 12804 / CCUG 43448).